The primary structure comprises 827 residues: Cadherin-17 (827 aa).

The N-terminal stretch at 1-21 (MVSAQLHFLCLLTLYLTGAYG) is a signal peptide. Residues 22 to 786 (QEGKFSGPLK…NQVGIPTVGM (765 aa)) lie on the Extracellular side of the membrane. Cadherin domains follow at residues 29–127 (PLKP…TFLQ), 128–243 (TKYE…APEP), 244–339 (VEIR…PPTC), 340–448 (LSQV…IPIF), 449–565 (ERSD…VPVF), 566–666 (PQQI…PPRL), and 667–776 (AKDY…RPAG). N-linked (GlcNAc...) asparagine glycosylation is found at N148, N183, N249, N418, N545, N573, and N721. The chain crosses the membrane as a helical span at residues 787–807 (AVGILLTTFLVIGIILAVVFI). Topologically, residues 808 to 827 (RMRKDKVEDPQSPENKPLRS) are cytoplasmic.

As to expression, liver and intestine.

The protein localises to the cell membrane. Functionally, cadherins are calcium-dependent cell adhesion proteins. They preferentially interact with themselves in a homophilic manner in connecting cells; cadherins may thus contribute to the sorting of heterogeneous cell types. LI-cadherin may have a role in the morphological organization of liver and intestine. The sequence is that of Cadherin-17 (Cdh17) from Rattus norvegicus (Rat).